Consider the following 148-residue polypeptide: Protein PLANT CADMIUM RESISTANCE 9 (148 aa).

Residues 59-78 traverse the membrane as a helical segment; that stretch reads LAGLMVVAMSSIGCGWYYAS.

It belongs to the cornifelin family.

It is found in the membrane. Functionally, may be involved in cadmium resistance. This Arabidopsis thaliana (Mouse-ear cress) protein is Protein PLANT CADMIUM RESISTANCE 9 (PCR9).